Consider the following 133-residue polypeptide: Thioredoxin H2 (133 aa).

The disordered stretch occupies residues 1-22 (MGGALSTVFGSGEDATAAGTES). The Thioredoxin domain maps to 6 to 133 (STVFGSGEDA…LEKKVSKLRA (128 aa)). Residues cysteine 59 and cysteine 62 each act as nucleophile in the active site. A disulfide bond links cysteine 59 and cysteine 62.

Belongs to the thioredoxin family. Plant H-type subfamily. As to quaternary structure, interacts with MDH1.

It localises to the cytoplasm. It is found in the mitochondrion. Its function is as follows. Thiol-disulfide oxidoreductase probably involved in the redox regulation of a number of cytosolic enzymes. Possesses insulin disulfide bonds reducing activity. The protein is Thioredoxin H2 (TRX2) of Arabidopsis thaliana (Mouse-ear cress).